Consider the following 313-residue polypeptide: Pyrimidine-specific ribonucleoside hydrolase RihB (313 aa).

The active-site Proton acceptor is D11. Ca(2+) is bound by residues D11, D16, and V124. Q227 and H239 together coordinate substrate. Ca(2+) is bound at residue D240.

It belongs to the IUNH family. RihB subfamily. In terms of assembly, homotetramer. Requires Ca(2+) as cofactor.

It catalyses the reaction a pyrimidine ribonucleoside + H2O = a pyrimidine nucleobase + D-ribose. Its function is as follows. Hydrolyzes cytidine or uridine to ribose and cytosine or uracil, respectively. Has a clear preference for cytidine over uridine. Strictly specific for ribonucleosides. This chain is Pyrimidine-specific ribonucleoside hydrolase RihB, found in Escherichia coli (strain SE11).